A 146-amino-acid polypeptide reads, in one-letter code: Peptidyl-lysine N-acetyltransferase YiaC (146 aa).

The region spanning 1–143 (MIREAQRSEL…PTWIMSWPVV (143 aa)) is the N-acetyltransferase domain.

Belongs to the acetyltransferase family.

The catalysed reaction is L-lysyl-[protein] + acetyl-CoA = N(6)-acetyl-L-lysyl-[protein] + CoA + H(+). N-epsilon-lysine acetyltransferase that catalyzes acetylation of a large number of proteins. Overexpression inhibits motility. The polypeptide is Peptidyl-lysine N-acetyltransferase YiaC (yiaC) (Escherichia coli (strain K12)).